The primary structure comprises 328 residues: Phosphatidylglycerol--prolipoprotein diacylglyceryl transferase (328 aa).

3 helical membrane-spanning segments follow: residues 15–35 (VIQGIPITWYSLSYIFIILIS), 58–78 (FMFSLVLGAILGGRLASTLVY), and 106–126 (GMAIHGGFLGAIIAPLIIINT). Arginine 156 provides a ligand contact to a 1,2-diacyl-sn-glycero-3-phospho-(1'-sn-glycerol). 2 helical membrane-spanning segments follow: residues 242–262 (GFIFGIYVMLYAFFRFFIEYL) and 289–309 (ISMGQILSLVLMFSGLIWVVV).

Belongs to the Lgt family.

Its subcellular location is the cell inner membrane. It carries out the reaction L-cysteinyl-[prolipoprotein] + a 1,2-diacyl-sn-glycero-3-phospho-(1'-sn-glycerol) = an S-1,2-diacyl-sn-glyceryl-L-cysteinyl-[prolipoprotein] + sn-glycerol 1-phosphate + H(+). It functions in the pathway protein modification; lipoprotein biosynthesis (diacylglyceryl transfer). Catalyzes the transfer of the diacylglyceryl group from phosphatidylglycerol to the sulfhydryl group of the N-terminal cysteine of a prolipoprotein, the first step in the formation of mature lipoproteins. The chain is Phosphatidylglycerol--prolipoprotein diacylglyceryl transferase from Borrelia garinii subsp. bavariensis (strain ATCC BAA-2496 / DSM 23469 / PBi) (Borreliella bavariensis).